The chain runs to 480 residues: Probable pectin lyase F-2 (480 aa).

The N-terminal stretch at 1 to 25 (MTLIRTVLMAAALLGASAHAQGVVG) is a signal peptide. Cysteines 83 and 106 form a disulfide. N-linked (GlcNAc...) asparagine glycosylation occurs at asparagine 111. Arginine 256 is a catalytic residue. Cysteine 322 and cysteine 330 are disulfide-bonded. Low complexity predominate over residues 386 to 401 (SSSAIPSSTPAPSSSA). Residues 386–436 (SSSAIPSSTPAPSSSALAKRHGGHDRHGLGHIPHLTEGGPGAWHTPGPAPS) form a disordered region.

The protein belongs to the polysaccharide lyase 1 family.

The protein resides in the secreted. The catalysed reaction is Eliminative cleavage of (1-&gt;4)-alpha-D-galacturonan methyl ester to give oligosaccharides with 4-deoxy-6-O-methyl-alpha-D-galact-4-enuronosyl groups at their non-reducing ends.. Pectinolytic enzymes consist of four classes of enzymes: pectin lyase, polygalacturonase, pectin methylesterase and rhamnogalacturonase. Among pectinolytic enzymes, pectin lyase is the most important in depolymerization of pectin, since it cleaves internal glycosidic bonds of highly methylated pectins. The protein is Probable pectin lyase F-2 (pelF-2) of Aspergillus terreus (strain NIH 2624 / FGSC A1156).